The following is a 237-amino-acid chain: Uridylate kinase (237 aa).

Lys11–Gly14 is a binding site for ATP. Position 52 (Gly52) interacts with UMP. Residues Gly53 and Arg57 each contribute to the ATP site. UMP contacts are provided by residues Asp72 and Thr134–Thr141. Residues Asn162, Tyr168, and Asp171 each contribute to the ATP site.

The protein belongs to the UMP kinase family. As to quaternary structure, homohexamer.

It localises to the cytoplasm. The enzyme catalyses UMP + ATP = UDP + ADP. It functions in the pathway pyrimidine metabolism; CTP biosynthesis via de novo pathway; UDP from UMP (UMPK route): step 1/1. With respect to regulation, inhibited by UTP. Its function is as follows. Catalyzes the reversible phosphorylation of UMP to UDP. The polypeptide is Uridylate kinase (Mycoplasma capricolum subsp. capricolum (strain California kid / ATCC 27343 / NCTC 10154)).